The primary structure comprises 715 residues: DNA ligase (715 aa).

NAD(+)-binding positions include 47-51, 96-97, and Glu-128; these read DADYD and SL. Lys-130 acts as the N6-AMP-lysine intermediate in catalysis. 4 residues coordinate NAD(+): Arg-151, Glu-188, Lys-306, and Lys-330. Zn(2+)-binding residues include Cys-435, Cys-438, Cys-453, and Cys-459. The 79-residue stretch at 637–715 folds into the BRCT domain; sequence RRDTAVAGKT…EDEWLALIGN (79 aa).

Belongs to the NAD-dependent DNA ligase family. LigA subfamily. Requires Mg(2+) as cofactor. Mn(2+) serves as cofactor.

It carries out the reaction NAD(+) + (deoxyribonucleotide)n-3'-hydroxyl + 5'-phospho-(deoxyribonucleotide)m = (deoxyribonucleotide)n+m + AMP + beta-nicotinamide D-nucleotide.. DNA ligase that catalyzes the formation of phosphodiester linkages between 5'-phosphoryl and 3'-hydroxyl groups in double-stranded DNA using NAD as a coenzyme and as the energy source for the reaction. It is essential for DNA replication and repair of damaged DNA. The polypeptide is DNA ligase (Rhodopseudomonas palustris (strain TIE-1)).